Reading from the N-terminus, the 328-residue chain is MAKIYRDVDASLEPLKGKTIAVIGYGIQGRAQALNLRDSGLNVILGLRRGGKSWDQAVAEGFRVFEIGQAVAKADVVMVLIPDMEQPKVWEEQIEPNLKPGTVVDFAHGFNIHFGLIKPPPNVDVVMVAPKGPGRAVREEYLSGRGVPALVAVYQNYSGRAMEYALAIAKGIGATRAGVIETTFAEETETDLIGEQTVLVGGLMELIKKGFETLVELGYQPEVAYFEVLNEAKLIMDLIWQRGIYGMLNGVSDTAKYGGLTVGPKIIDESVKQRMREAAARVRSGEFAKEWVTEYNRGGPTLRKLMEEVKNHQIEKVGIEMRRLLFGQ.

The region spanning 2–182 (AKIYRDVDAS…GATRAGVIET (181 aa)) is the KARI N-terminal Rossmann domain. Residues 25–28 (YGIQ), R48, S53, and 83–86 (DMEQ) each bind NADP(+). H108 is a catalytic residue. G134 provides a ligand contact to NADP(+). The region spanning 183-328 (TFAEETETDL…IEMRRLLFGQ (146 aa)) is the KARI C-terminal knotted domain. Mg(2+) contacts are provided by D191, E195, E227, and E231. Residue S252 coordinates substrate.

It belongs to the ketol-acid reductoisomerase family. Requires Mg(2+) as cofactor.

The catalysed reaction is (2R)-2,3-dihydroxy-3-methylbutanoate + NADP(+) = (2S)-2-acetolactate + NADPH + H(+). The enzyme catalyses (2R,3R)-2,3-dihydroxy-3-methylpentanoate + NADP(+) = (S)-2-ethyl-2-hydroxy-3-oxobutanoate + NADPH + H(+). The protein operates within amino-acid biosynthesis; L-isoleucine biosynthesis; L-isoleucine from 2-oxobutanoate: step 2/4. It functions in the pathway amino-acid biosynthesis; L-valine biosynthesis; L-valine from pyruvate: step 2/4. Involved in the biosynthesis of branched-chain amino acids (BCAA). Catalyzes an alkyl-migration followed by a ketol-acid reduction of (S)-2-acetolactate (S2AL) to yield (R)-2,3-dihydroxy-isovalerate. In the isomerase reaction, S2AL is rearranged via a Mg-dependent methyl migration to produce 3-hydroxy-3-methyl-2-ketobutyrate (HMKB). In the reductase reaction, this 2-ketoacid undergoes a metal-dependent reduction by NADPH to yield (R)-2,3-dihydroxy-isovalerate. This chain is Ketol-acid reductoisomerase (NADP(+)), found in Pyrobaculum arsenaticum (strain DSM 13514 / JCM 11321 / PZ6).